A 543-amino-acid chain; its full sequence is MNSNTPSSDNSSPDNVSPDTSDMASAGDDSALATPPPRPSLWKDMTTNEDWWAIWCAALLLLIAFAAVWIGQPENLSELIAGSTMEEVSQVETAPENAGPSAEAENEAIETENTAPAENADLEVAETQEVAEEEPYEYASPLKPFLAKPGKWTANPLDAISSSWSGILGVFLIIAALFAFANQMRGKSAGAFLAAFPVIFLLATLAYWMSGQSVVKAYNLEYALWALLVGLIISNTVGTPDFLRPAISTEFYIKTGLVLLGAEVLMSRLLALGLPGVFVAWLVTPVVLITTYWFGQKVLKIQSKSLNMVISADMSVCGVSAAIATAAACKAKKEELSLSIGLSLGFTVIMMAVMPAVITAMGIDPILGGAWLGGTIDSTGAVAAAGAVLGDEALEVAATVKMIQNILIGVTAFCVAIYWVTFVERDPAGPRIGISEIWYRFPKFVLGFVSMSILFSILYSYMTNGPELINAMIGGSTKTLRGWFFCLAFVSIGLETNFRQLLPQLKGGKPLVLYVCGQSLNLVLTLVMAYLMFKVVFADTVAP.

Residues M1–D22 show a composition bias toward low complexity. Residues M1–L41 form a disordered region. The chain crosses the membrane as a helical span at residues W51–P73. The interval V91–A120 is disordered. The next 11 helical transmembrane spans lie at I160–N182, A189–G211, E221–L243, L270–Y292, N307–C329, L336–I358, G368–G390, I403–F422, I437–Y459, T479–T496, and L511–F533.

Belongs to the UPF0324 family.

The protein resides in the cell membrane. The sequence is that of UPF0324 membrane protein RB9488 from Rhodopirellula baltica (strain DSM 10527 / NCIMB 13988 / SH1).